A 113-amino-acid polypeptide reads, in one-letter code: MTAQLHMMSDKHDQDNDASVLLQTRPRTKRPPLYKVLLLNDDYTPMEFVVHVLERFFGMNHAQAFEIMLTVHKKGVAVVGVFSHEIAETKVSLVMDFARRHQHPLQCTMEKED.

The disordered stretch occupies residues 1–24 (MTAQLHMMSDKHDQDNDASVLLQT).

This sequence belongs to the ClpS family. As to quaternary structure, binds to the N-terminal domain of the chaperone ClpA.

Its function is as follows. Involved in the modulation of the specificity of the ClpAP-mediated ATP-dependent protein degradation. This Ruegeria pomeroyi (strain ATCC 700808 / DSM 15171 / DSS-3) (Silicibacter pomeroyi) protein is ATP-dependent Clp protease adapter protein ClpS.